The primary structure comprises 345 residues: 4-hydroxy-3-methylbut-2-en-1-yl diphosphate synthase (flavodoxin) (345 aa).

4 residues coordinate [4Fe-4S] cluster: Cys-271, Cys-274, Cys-306, and Glu-313.

It belongs to the IspG family. The cofactor is [4Fe-4S] cluster.

The enzyme catalyses (2E)-4-hydroxy-3-methylbut-2-enyl diphosphate + oxidized [flavodoxin] + H2O + 2 H(+) = 2-C-methyl-D-erythritol 2,4-cyclic diphosphate + reduced [flavodoxin]. The protein operates within isoprenoid biosynthesis; isopentenyl diphosphate biosynthesis via DXP pathway; isopentenyl diphosphate from 1-deoxy-D-xylulose 5-phosphate: step 5/6. In terms of biological role, converts 2C-methyl-D-erythritol 2,4-cyclodiphosphate (ME-2,4cPP) into 1-hydroxy-2-methyl-2-(E)-butenyl 4-diphosphate. This Haemophilus influenzae (strain PittEE) protein is 4-hydroxy-3-methylbut-2-en-1-yl diphosphate synthase (flavodoxin).